A 257-amino-acid polypeptide reads, in one-letter code: Hydroxyacylglutathione hydrolase (257 aa).

Residues His-54, His-56, Asp-58, His-59, His-113, Asp-137, and His-175 each coordinate Zn(2+).

The protein belongs to the metallo-beta-lactamase superfamily. Glyoxalase II family. Monomer. The cofactor is Zn(2+).

The catalysed reaction is an S-(2-hydroxyacyl)glutathione + H2O = a 2-hydroxy carboxylate + glutathione + H(+). The protein operates within secondary metabolite metabolism; methylglyoxal degradation; (R)-lactate from methylglyoxal: step 2/2. Its function is as follows. Thiolesterase that catalyzes the hydrolysis of S-D-lactoyl-glutathione to form glutathione and D-lactic acid. The chain is Hydroxyacylglutathione hydrolase from Nostoc punctiforme (strain ATCC 29133 / PCC 73102).